The sequence spans 156 residues: Transcription elongation factor GreA (156 aa).

Residues 7 to 27 (MTQEGLDKLKLELENLKLVKR) are a coiled coil.

The protein belongs to the GreA/GreB family.

Functionally, necessary for efficient RNA polymerase transcription elongation past template-encoded arresting sites. The arresting sites in DNA have the property of trapping a certain fraction of elongating RNA polymerases that pass through, resulting in locked ternary complexes. Cleavage of the nascent transcript by cleavage factors such as GreA or GreB allows the resumption of elongation from the new 3'terminus. GreA releases sequences of 2 to 3 nucleotides. This Lactococcus lactis subsp. lactis (strain IL1403) (Streptococcus lactis) protein is Transcription elongation factor GreA.